Here is a 461-residue protein sequence, read N- to C-terminus: MNEIKEKIPRIGMVSLGCPKALTDSELILTRLSAEGYQTSKTFEGADLVIVNTCGFIDDAVRESLDTIGEALAANGKVIVTGCLGAKSGDNGSNLVRQMHPSVLAVTGPHATQEVMDAVHLNLPKPHDPFVDLVPNAFGIAGIKLTPRHYAYLKISEGCNHRCTFCIIPSMRGDLVSRPVGDVLSEARALFEGGVKELLVISQDTSAYGVDVKYRTGFWDGKPVKTRMLELVQALGEIAAPFGAWVRLHYVYPYPSVDEILPLMATGKVLPYLDVPLQHSHPDVLRRMKRPASGEKNLERISRWREMCPEIVIRSTFIAGFPGETEAEFEHLLDFMREAKIDRAGCFAYSAVQGATANDIPGMLPLGVREERRARFMAVAEAVSSQKLQQRVGATMQVLVDHAPALGRKGGTGRSYADAPEIDGVVKLLPPEKISKTMKVGEFTRARIVGVQGHDLIAVPV.

Positions 9-124 constitute an MTTase N-terminal domain; sequence PRIGMVSLGC…VMDAVHLNLP (116 aa). [4Fe-4S] cluster-binding residues include Cys18, Cys54, Cys83, Cys159, Cys163, and Cys166. The 243-residue stretch at 145–387 folds into the Radical SAM core domain; sequence LTPRHYAYLK…AVAEAVSSQK (243 aa). The TRAM domain occupies 389–461; that stretch reads QQRVGATMQV…QGHDLIAVPV (73 aa).

Belongs to the methylthiotransferase family. RimO subfamily. [4Fe-4S] cluster is required as a cofactor.

Its subcellular location is the cytoplasm. The enzyme catalyses L-aspartate(89)-[ribosomal protein uS12]-hydrogen + (sulfur carrier)-SH + AH2 + 2 S-adenosyl-L-methionine = 3-methylsulfanyl-L-aspartate(89)-[ribosomal protein uS12]-hydrogen + (sulfur carrier)-H + 5'-deoxyadenosine + L-methionine + A + S-adenosyl-L-homocysteine + 2 H(+). Its function is as follows. Catalyzes the methylthiolation of an aspartic acid residue of ribosomal protein uS12. This chain is Ribosomal protein uS12 methylthiotransferase RimO, found in Polaromonas naphthalenivorans (strain CJ2).